Here is a 351-residue protein sequence, read N- to C-terminus: Keratocan (351 aa).

A signal peptide spans 1–20 (MATPNCLILWVLLIADTVWT). Positions 34–72 (DWDVHDDFYCPRECFCPPSFPTALYCENRGLTEIPPIPS) constitute an LRRNT domain. Disulfide bonds link Cys43–Cys49 and Cys47–Cys59. LRR repeat units lie at residues 73-94 (RIWY…PFEN), 97-118 (QLRW…KGAL), 123-143 (KLLF…PLPR), 144-165 (SLEQ…TFSN), 168-181 (NLTL…KLLD), 194-214 (NLMQ…RLPA), 215-236 (NTMQ…YFNV), 239-259 (KVAF…PSRG), 264-283 (SILD…RINA), and 284-305 (NLQH…VICP). Residue Asn94 is glycosylated (N-linked (GlcNAc...) (keratan sulfate) asparagine). An N-linked (GlcNAc...) (keratan sulfate) asparagine glycan is attached at Asn168. N-linked (GlcNAc...) asparagine glycosylation is present at Asn223. Residue Asn299 is glycosylated (N-linked (GlcNAc...) asparagine). A disulfide bond links Cys304 and Cys342.

Belongs to the small leucine-rich proteoglycan (SLRP) family. SLRP class II subfamily. Post-translationally, binds keratan sulfate chains. Selectively expressed in cornea of adult where it is detected in keratocytes but not in scleral cells. In embryo, first detected in periocular mesenchymal cells migrating toward developing cornea on 13.5 dpc; expression gradually restricted to corneal stromal cells on 14.5 to 18.5 dpc. Detected in scleral cells of 15.5 dpc but not in 18.5 dpc embryos.

The protein resides in the secreted. The protein localises to the extracellular space. It localises to the extracellular matrix. In terms of biological role, may be important in developing and maintaining corneal transparency and for the structure of the stromal matrix. In Mus musculus (Mouse), this protein is Keratocan (Kera).